Reading from the N-terminus, the 459-residue chain is Light-independent protochlorophyllide reductase subunit N (459 aa).

Residues cysteine 22, cysteine 47, and cysteine 107 each contribute to the [4Fe-4S] cluster site.

This sequence belongs to the BchN/ChlN family. In terms of assembly, protochlorophyllide reductase is composed of three subunits; ChlL, ChlN and ChlB. Forms a heterotetramer of two ChlB and two ChlN subunits. [4Fe-4S] cluster is required as a cofactor.

Its subcellular location is the plastid. The protein localises to the chloroplast. It carries out the reaction chlorophyllide a + oxidized 2[4Fe-4S]-[ferredoxin] + 2 ADP + 2 phosphate = protochlorophyllide a + reduced 2[4Fe-4S]-[ferredoxin] + 2 ATP + 2 H2O. Its pathway is porphyrin-containing compound metabolism; chlorophyll biosynthesis (light-independent). Functionally, component of the dark-operative protochlorophyllide reductase (DPOR) that uses Mg-ATP and reduced ferredoxin to reduce ring D of protochlorophyllide (Pchlide) to form chlorophyllide a (Chlide). This reaction is light-independent. The NB-protein (ChlN-ChlB) is the catalytic component of the complex. The polypeptide is Light-independent protochlorophyllide reductase subunit N (Pinus contorta (Shore pine)).